The sequence spans 823 residues: Probable inorganic carbon transporter subunit DabA (823 aa).

Zn(2+) contacts are provided by Cys361, Asp363, His527, and Cys542.

This sequence belongs to the inorganic carbon transporter (TC 9.A.2) DabA family. In terms of assembly, forms a complex with DabB. Requires Zn(2+) as cofactor.

It localises to the cell inner membrane. With respect to regulation, intracellular DIC accumulation is sensitive to CCCP (carbonyl cyanide-m-chlorophenylhydrazone) and DCCD (N,N-dicyclohexylcarbodiimide) and therefore likely driven by either proton potential, ATP, or both. Part of an energy-coupled inorganic carbon pump. Its function is as follows. Probably involved in transport of dissolved inorganic carbon (DIC) with upstream gene dabB (Tcr_0853); has been suggested to be a proton-DIC symporter. This is Probable inorganic carbon transporter subunit DabA from Hydrogenovibrio crunogenus (strain DSM 25203 / XCL-2) (Thiomicrospira crunogena).